A 224-amino-acid polypeptide reads, in one-letter code: Oocyte zinc finger protein XlCOF6.1 (224 aa).

C2H2-type zinc fingers lie at residues 6-28 (FSCS…CRSH), 34-56 (FHCT…QRYH), 62-84 (FTCF…IRMH), 90-112 (FSCS…QKIH), 118-140 (FSCS…YRTH), 146-168 (FPCP…RRTH), 174-196 (FACS…RLGH), and 202-224 (FSCS…LKSH).

Belongs to the krueppel C2H2-type zinc-finger protein family.

It is found in the nucleus. Its function is as follows. May be involved in transcriptional regulation. In Xenopus laevis (African clawed frog), this protein is Oocyte zinc finger protein XlCOF6.1.